A 223-amino-acid polypeptide reads, in one-letter code: MDYAALSPHLGGWALRDHHIGDSSLRGGAINWGNLGSRITSALNSTGRWLYNTGNRFVHSNTFNQIKQGIQDSGVIRNVANLAGETLGALTDIGRLKLQQDLEKLRRKALGEEGPATQAELQALIQALQAQVAAGEPPAAPAAPAPAPPLVPTTRPIPEMVTEVKPPVTSSAPAVPVDVPTTLEMRPPPPKRRRKRARPGQWRARLDSLSGTGVATATRRMCY.

Residues 1–28 (MDYAALSPHLGGWALRDHHIGDSSLRGG) constitute a propeptide that is removed on maturation. The interval 29–53 (AINWGNLGSRITSALNSTGRWLYNT) is amphipathic alpha-helix essential for membrane lytic activity. The involved in endosomal membrane lysis stretch occupies residues 31-52 (NWGNLGSRITSALNSTGRWLYN). Residues 47–73 (GRWLYNTGNRFVHSNTFNQIKQGIQDS) are interaction with hexon protein. The short motif at 66 to 75 (IKQGIQDSGV) is the Nuclear export signal element. 2 disordered regions span residues 136–155 (EPPA…PTTR) and 166–203 (PPVT…GQWR). The span at 138-151 (PAAPAAPAPAPPLV) shows a compositional bias: pro residues. The segment covering 166-182 (PPVTSSAPAVPVDVPTT) has biased composition (low complexity). The span at 189-198 (PPKRRRKRAR) shows a compositional bias: basic residues. Positions 204–215 (ARLDSLSGTGVA) match the Nuclear export signal motif. Positions 206-212 (LDSLSGT) are interaction with hexon protein. Residues 213–223 (GVATATRRMCY) form a binds to importin alpha/beta, involved in hexon nuclear import region.

This sequence belongs to the adenoviridae protein VI family. In terms of assembly, interacts with hexon protein; this interaction allows nuclear import of hexon trimers and possibly pre-capsid assembly. Interacts (via C-terminal NLS) with importin alpha/beta. As to quaternary structure, interacts (via PPxY motif) with host NEDD4 ubiquitine ligase; this interaction might play a role in virus intracellular transport during entry. Part of a complex composed of the core-capsid bridging protein, the endosome lysis protein VI and the hexon-linking protein VIII; these interactions bridge the virus core to the capsid. Interacts with peripentonal hexons; this interaction stabilizes the capsid by gluing two peripentonal hexons together and joining them with an adjacent group-of-nine hexon. Heterodimer with the viral protease; disulfide-linked. Interacts with the viral protease. In terms of processing, ubiquitinated by Nedd4 following partial capsid disassembly; which might play a role in intracellular virus movement during entry. Contains the major nuclear import and export signals. Proteolytically removed during virion maturation. The processing of the C-terminus turns the precursor into a mature viral structural protein and abrogates its ability to promote hexon import and act as a potential chaperone protein.

The protein localises to the host nucleus. Its subcellular location is the host cytoplasm. It localises to the virion. In terms of biological role, during virus assembly, promotes hexon trimers nuclear import through nuclear pore complexes via an importin alpha/beta-dependent mechanism. By analogy to herpesviruses capsid assembly, might act as a chaperone to promote the formation of the icosahedral capsid. Its function is as follows. Structural component of the virion that provides increased stability to the particle shell through its interaction with the core-capsid bridging protein and the hexon-linking protein VIII. Fibers shedding during virus entry into host cell allows the endosome lysis protein to be exposed as a membrane-lytic peptide. Exhibits pH-independent membrane fragmentation activity and probably mediates viral rapid escape from host endosome via organellar membrane lysis. It is not clear if it then remains partially associated with the capsid and involved in the intracellular microtubule-dependent transport of capsid to the nucleus, or if it is lost during endosomal penetration. Cofactor that activates the viral protease. Binds to viral protease in a 1:1 ratio. The polypeptide is Pre-protein VI (Fowl adenovirus A serotype 1 (strain CELO / Phelps) (FAdV-1)).